A 312-amino-acid polypeptide reads, in one-letter code: MTYETDTTLMFVAVCEALVGILGNAFIALVNFMGWMKNRKITAIDLILSSLAMSRICLQCIILLDCIILVQYPDTYNRGKEMRIIDFFWTLTNHLSVWFATCLSIFYFFKIANFFHPLFLWIKWRIDKLILRTLLACLILSLCFSLPVTENLTDDFRRCVKTKERINSTLRCKLNKAGYASVKVNLNLVMLFPFSVSLVSFLLLILSLWRHTRQMQLNVTGYNDPSTTAHVKATKAVISFLVLFIVYCLAFLIATSSYFMPESELAVIWGELIALIYPSSHSFILILGNSKLKQASVRVLCRVKTMLKGRKY.

Over 1-9 (MTYETDTTL) the chain is Extracellular. A helical transmembrane segment spans residues 10–30 (MFVAVCEALVGILGNAFIALV). Residues 31–49 (NFMGWMKNRKITAIDLILS) lie on the Cytoplasmic side of the membrane. Residues 50–70 (SLAMSRICLQCIILLDCIILV) traverse the membrane as a helical segment. Over 71 to 101 (QYPDTYNRGKEMRIIDFFWTLTNHLSVWFAT) the chain is Extracellular. A helical transmembrane segment spans residues 102 to 122 (CLSIFYFFKIANFFHPLFLWI). The Cytoplasmic portion of the chain corresponds to 123–128 (KWRIDK). Residues 129–149 (LILRTLLACLILSLCFSLPVT) form a helical membrane-spanning segment. Residues 150 to 187 (ENLTDDFRRCVKTKERINSTLRCKLNKAGYASVKVNLN) are Extracellular-facing. N-linked (GlcNAc...) asparagine glycosylation is found at Asn-151 and Asn-167. Residues 188–208 (LVMLFPFSVSLVSFLLLILSL) traverse the membrane as a helical segment. Residues 209 to 235 (WRHTRQMQLNVTGYNDPSTTAHVKATK) lie on the Cytoplasmic side of the membrane. A helical membrane pass occupies residues 236 to 256 (AVISFLVLFIVYCLAFLIATS). Over 257–266 (SYFMPESELA) the chain is Extracellular. The helical transmembrane segment at 267 to 287 (VIWGELIALIYPSSHSFILIL) threads the bilayer. Residues 288–312 (GNSKLKQASVRVLCRVKTMLKGRKY) are Cytoplasmic-facing.

The protein belongs to the G-protein coupled receptor T2R family. Expressed in subsets of taste receptor cells of the tongue and palate epithelium and exclusively in gustducin-positive cells. Expressed in 15% taste bud cells in circumvallate and foliate papillae but only in 2% in fungiform papillae. Expressed in the duodenum, antrum and fundus (part of the stomach) and in gastric endocrine cells.

The protein localises to the membrane. Functionally, gustducin-coupled receptor implicated in the perception of bitter compounds in the oral cavity and the gastrointestinal tract. Signals through PLCB2 and the calcium-regulated cation channel TRPM5. The chain is Taste receptor type 2 member 7 (Tas2r7) from Rattus norvegicus (Rat).